The sequence spans 539 residues: Alpha-aminoadipic semialdehyde dehydrogenase (539 aa).

The transit peptide at 1 to 26 (MWRVPRRLCVQSVKTSKLSGPWSRPA) directs the protein to the mitochondrion. K86, K94, and K97 each carry N6-acetyllysine; alternate. K86, K94, and K97 each carry N6-succinyllysine; alternate. Residues 192-194 (TAF), K218, 258-259 (GT), 274-275 (GS), 274-279 (GSTQVG), and 296-297 (EL) each bind NAD(+). Residue E296 is the Proton acceptor of the active site. Catalysis depends on C330, which acts as the Nucleophile. A (S)-2-amino-6-oxohexanoate-binding site is contributed by T331. NAD(+) is bound at residue E427. K462 carries the post-translational modification N6-acetyllysine. Positions 489 and 490 each coordinate (S)-2-amino-6-oxohexanoate. N6-acetyllysine is present on K500. K537 carries the N6-succinyllysine modification.

It belongs to the aldehyde dehydrogenase family. In terms of assembly, homotetramer. As to expression, present in liver, kidney, brain and pancreas, and at lower levels in jejunum, duodenum, stomach and testes (at protein level).

The protein localises to the cytoplasm. The protein resides in the cytosol. It localises to the nucleus. Its subcellular location is the mitochondrion. The catalysed reaction is nonanal + NAD(+) + H2O = nonanoate + NADH + 2 H(+). The enzyme catalyses (S)-2-amino-6-oxohexanoate + NAD(+) + H2O = L-2-aminoadipate + NADH + 2 H(+). It carries out the reaction betaine aldehyde + NAD(+) + H2O = glycine betaine + NADH + 2 H(+). It catalyses the reaction an aldehyde + NAD(+) + H2O = a carboxylate + NADH + 2 H(+). The catalysed reaction is hexanal + NAD(+) + H2O = hexanoate + NADH + 2 H(+). The enzyme catalyses octanal + NAD(+) + H2O = octanoate + NADH + 2 H(+). It carries out the reaction (E)-non-2-enal + NAD(+) + H2O = (E)-non-2-enoate + NADH + 2 H(+). It catalyses the reaction (E)-4-hydroxynon-2-enal + NAD(+) + H2O = (E)-4-hydroxynon-2-enoate + NADH + 2 H(+). The protein operates within amine and polyamine biosynthesis; betaine biosynthesis via choline pathway; betaine from betaine aldehyde: step 1/1. In terms of biological role, multifunctional enzyme mediating important protective effects. Metabolizes betaine aldehyde to betaine, an important cellular osmolyte and methyl donor. Protects cells from oxidative stress by metabolizing a number of lipid peroxidation-derived aldehydes. Involved in lysine catabolism. This chain is Alpha-aminoadipic semialdehyde dehydrogenase, found in Mus musculus (Mouse).